The primary structure comprises 611 residues: Glutathione hydrolase proenzyme 2 (611 aa).

The Cytoplasmic portion of the chain corresponds to 1 to 42 (MSPTDTTPLLYSWDDQSRHQDPDWHKLRNYHGAWYRRISRRR). The chain crosses the membrane as a helical; Signal-anchor for type II membrane protein span at residues 43-63 (FSQFIFAFGLMTLFVLVYSIS). Topologically, residues 64 to 611 (SNLHTPTQFT…PRKYGQAAAY (548 aa)) are lumenal. The N-linked (GlcNAc...) asparagine glycan is linked to asparagine 138. Residue arginine 147 coordinates L-glutamate. N-linked (GlcNAc...) asparagine glycans are attached at residues asparagine 153, asparagine 297, and asparagine 396. The active-site Nucleophile is threonine 420. L-glutamate contacts are provided by residues threonine 438, asparagine 440, glutamine 459, aspartate 462, 490-491 (SS), and 512-513 (GG).

It belongs to the gamma-glutamyltransferase family. As to quaternary structure, heterodimer composed of the light and heavy chains. The active site is located in the light chain. Cleaved by autocatalysis into a large and a small subunit.

It localises to the vacuole membrane. It catalyses the reaction an N-terminal (5-L-glutamyl)-[peptide] + an alpha-amino acid = 5-L-glutamyl amino acid + an N-terminal L-alpha-aminoacyl-[peptide]. The enzyme catalyses glutathione + H2O = L-cysteinylglycine + L-glutamate. It carries out the reaction an S-substituted glutathione + H2O = an S-substituted L-cysteinylglycine + L-glutamate. It participates in sulfur metabolism; glutathione metabolism. Functionally, catalyzes the transfer of the gamma-glutamyl moiety of glutathione (GSH) and other gamma-glutamyl compounds to amino acids and peptides. Major GSH-degrading enzyme, catalyzing the hydrolytic release of L-glutamate from GSH. Plays a role in the turnover of the vacuolar GSH, serving as an alternative nitrogen source during nitrogen starvation. The polypeptide is Glutathione hydrolase proenzyme 2 (ggt2) (Schizosaccharomyces pombe (strain 972 / ATCC 24843) (Fission yeast)).